The chain runs to 210 residues: MSAVPDIPGGPAQRLAQACDALRLPADAGQQQKLLRYIEQMQRWNRTYNLTAIRDPGQMLVQHLFDSLSVVAPLERGLPGVVLAIMRAHWDVTCVDAVEKKTAFVRQMAGALGLPNLQAAHTRIEQLEPAQCDVVISRAFASLQDFAKLAGRHVREGGTLVAMKGKVPDDEIQALQQHGHWTVERIEPLVVPALDAQRCLIWMRRSQGNI.

S-adenosyl-L-methionine-binding positions include Leu-78, 124-125 (IE), and Arg-138.

The protein belongs to the methyltransferase superfamily. RNA methyltransferase RsmG family.

It is found in the cytoplasm. It carries out the reaction guanosine(527) in 16S rRNA + S-adenosyl-L-methionine = N(7)-methylguanosine(527) in 16S rRNA + S-adenosyl-L-homocysteine. Functionally, specifically methylates the N7 position of guanine in position 527 of 16S rRNA. The chain is Ribosomal RNA small subunit methyltransferase G from Bordetella bronchiseptica (strain ATCC BAA-588 / NCTC 13252 / RB50) (Alcaligenes bronchisepticus).